Here is a 517-residue protein sequence, read N- to C-terminus: Protein ERGIC-53 (517 aa).

The signal sequence occupies residues 1–30 (MAVSRRRVPQAGARSFFCALLLSFSQFTGS). Topologically, residues 31–484 (DGTGGDAAAP…DLPPFPSCLS (454 aa)) are lumenal. Residues 52-275 (RRFEYKYSFK…DVLSFLTFQL (224 aa)) form the L-type lectin-like domain. Residues Ser-96 and Asp-129 each contribute to the a carbohydrate site. Ca(2+) contacts are provided by Asp-160, Phe-162, and Asn-164. A carbohydrate-binding residues include Asn-164 and His-186. Asp-189 is a binding site for Ca(2+). A disulfide bridge links Cys-198 with Cys-238. Residue 259–261 (GGL) coordinates a carbohydrate. The residue at position 433 (Ser-433) is a Phosphoserine. The helical transmembrane segment at 485–505 (TIHFVIFVVVQTVLFVGYIMY) threads the bilayer. Over 506-517 (RTQQEAAAKKFF) the chain is Cytoplasmic. A mediates interaction with RAB3GAP1, RAB3GAP2 and UBXN6 region spans residues 506 to 517 (RTQQEAAAKKFF). The ER export motif signature appears at 516–517 (FF).

Exists both as a covalent disulfide-linked homohexamer, and a complex of three disulfide-linked dimers non-covalently kept together. Interacts with MCFD2. May interact with TMEM115. Interacts with RAB3GAP1 and RAB3GAP2. Interacts with UBXN6. Interacts with SERPINA1/alpha1-antitrypsin. Interacts with BET1.

The protein resides in the endoplasmic reticulum-Golgi intermediate compartment membrane. It is found in the golgi apparatus membrane. The protein localises to the endoplasmic reticulum membrane. Its function is as follows. Mannose-specific lectin. May recognize sugar residues of glycoproteins, glycolipids, or glycosylphosphatidyl inositol anchors and may be involved in the sorting or recycling of proteins, lipids, or both. The LMAN1-MCFD2 complex forms a specific cargo receptor for the ER-to-Golgi transport of selected proteins. This chain is Protein ERGIC-53 (Lman1), found in Mus musculus (Mouse).